Reading from the N-terminus, the 269-residue chain is Phosphonates import ATP-binding protein PhnC 2 (269 aa).

One can recognise an ABC transporter domain in the interval 2–246; the sequence is LRIDSLSKRY…VLNEIYGEED (245 aa). ATP is bound at residue 35-42; sequence GPSGAGKS. A disordered region spans residues 246-269; the sequence is DWNASGPAQDSEENEAVSAGVATH.

This sequence belongs to the ABC transporter superfamily. Phosphonates importer (TC 3.A.1.9.1) family. The complex is composed of two ATP-binding proteins (PhnC), two transmembrane proteins (PhnE) and a solute-binding protein (PhnD).

Its subcellular location is the cell inner membrane. It catalyses the reaction phosphonate(out) + ATP + H2O = phosphonate(in) + ADP + phosphate + H(+). Its function is as follows. Part of the ABC transporter complex PhnCDE involved in phosphonates import. Responsible for energy coupling to the transport system. The protein is Phosphonates import ATP-binding protein PhnC 2 of Synechococcus sp. (strain JA-2-3B'a(2-13)) (Cyanobacteria bacterium Yellowstone B-Prime).